The following is a 332-amino-acid chain: MHPLLFLAGLCLGVASAAPQLYQSLDARWSQWKATHGKLYGMDEVWRRAVWERNMKMIEQHNREHSQGKHTFTMAMNAFGDMTNEEFRQVMNGLKIQKRKKWKVFQAPFFVEIPSSVDWREKGYVTPVKDQGYCLCCWAFSATGALEGQMFRKTGKLVSLSEQNLVDCSQTEGNEGYSGGLIDDAFQYVKDNGGLDSEESYPYHAQGDSCKYRPENSVANVTDYWDIPSKENELMITLAAVGPISAAIDASLDTFRFYKEGIYYDPSCSSEDVDHGVLVVGYGADGTETENKKYWIIKNSWGTDWGMDGYIKMAKDRDNHCGIASLASFPTV.

A signal peptide spans 1–17; the sequence is MHPLLFLAGLCLGVASA. A propeptide spans 18–112 (activation peptide); the sequence is APQLYQSLDA…KVFQAPFFVE (95 aa). E121 is a Zn(2+) binding site. The active site involves C137. Zn(2+) contacts are provided by E162, D183, E198, and D208. C168 and C210 are joined by a disulfide. Residue N220 is glycosylated (N-linked (GlcNAc...) asparagine). The Zn(2+) site is built by D226, D249, D272, and D274. A disulfide bond links C268 and C321. H275 is an active-site residue. The propeptide occupies 288–290; that stretch reads ETE. The active site involves N299.

This sequence belongs to the peptidase C1 family. In terms of assembly, dimer of a heavy and a light chain linked by disulfide bonds. Interacts with Long isoform of CD74/Ii chain; the interaction stabilizes the conformation of mature CTSL. In terms of processing, during export along the endocytic pathway, pro-CTSL undergoes several proteolytic cleavages to generate the CTSL single-chain and two-chain mature forms, composed of a heavy chain linked to a light chain by disulfide bonds. Autocleavage; produces the single-chain CTSL after cleavage of the propeptide. The cleavage can be intermolecular. In terms of tissue distribution, expressed in the endometrium.

It localises to the lysosome. The protein localises to the apical cell membrane. Its subcellular location is the cytoplasmic vesicle. The protein resides in the secretory vesicle. It is found in the chromaffin granule. It localises to the secreted. The protein localises to the extracellular space. It catalyses the reaction Specificity close to that of papain. As compared to cathepsin B, cathepsin L exhibits higher activity toward protein substrates, but has little activity on Z-Arg-Arg-NHMec, and no peptidyl-dipeptidase activity.. With respect to regulation, inhibited by the propeptide produced by autocleavage. Long isoform of CD74/Ii chain stabilizes the conformation of mature CTSL by binding to its active site and serving as a chaperone to help maintain a pool of mature enzyme in endocytic compartments and extracellular space of APCs. IFNG enhances the conversion into the CTSL mature and active form. Inhibited by CST6. Inhibited by the glycopeptide antibiotic teicoplanin. Inhibited by amantadine. In terms of biological role, thiol protease important for the overall degradation of proteins in lysosomes. Plays a critical for normal cellular functions such as general protein turnover, antigen processing and bone remodeling. Involved in the solubilization of cross-linked TG/thyroglobulin and in the subsequent release of thyroid hormone thyroxine (T4) by limited proteolysis of TG/thyroglobulin in the thyroid follicle lumen. In neuroendocrine chromaffin cells secretory vesicles, catalyzes the prohormone proenkephalin processing to the active enkephalin peptide neurotransmitter. In thymus, regulates CD4(+) T cell positive selection by generating the major histocompatibility complex class II (MHCII) bound peptide ligands presented by cortical thymic epithelial cells. Also mediates invariant chain processing in cortical thymic epithelial cells. Major elastin-degrading enzyme at neutral pH. Accumulates as a mature and active enzyme in the extracellular space of antigen presenting cells (APCs) to regulate degradation of the extracellular matrix in the course of inflammation. Secreted form generates endostatin from COL18A1. Critical for cardiac morphology and function. Plays an important role in hair follicle morphogenesis and cycling, as well as epidermal differentiation. Required for maximal stimulation of steroidogenesis by TIMP1. The chain is Procathepsin L (CTSL) from Felis catus (Cat).